We begin with the raw amino-acid sequence, 262 residues long: GTP cyclohydrolase 1 type 2 homolog (262 aa).

Positions 65, 102, 222, and 225 each coordinate a divalent metal cation.

Belongs to the GTP cyclohydrolase I type 2/NIF3 family. In terms of assembly, homohexamer.

This is GTP cyclohydrolase 1 type 2 homolog from Streptococcus pyogenes serotype M6 (strain ATCC BAA-946 / MGAS10394).